The primary structure comprises 211 residues: 3-demethoxyubiquinol 3-hydroxylase (211 aa).

The disordered stretch occupies residues 22–43; the sequence is KHPLNPNRKSPSANTVDGQLSD. A compositionally biased stretch (polar residues) spans 28 to 42; sequence NRKSPSANTVDGQLS. Positions 60, 90, 93, 142, 174, and 177 each coordinate Fe cation.

The protein belongs to the COQ7 family. Fe cation is required as a cofactor.

Its subcellular location is the cell membrane. It carries out the reaction a 5-methoxy-2-methyl-3-(all-trans-polyprenyl)benzene-1,4-diol + AH2 + O2 = a 3-demethylubiquinol + A + H2O. Its pathway is cofactor biosynthesis; ubiquinone biosynthesis. Its function is as follows. Catalyzes the hydroxylation of 2-nonaprenyl-3-methyl-6-methoxy-1,4-benzoquinol during ubiquinone biosynthesis. The chain is 3-demethoxyubiquinol 3-hydroxylase from Francisella philomiragia subsp. philomiragia (strain ATCC 25017 / CCUG 19701 / FSC 153 / O#319-036).